Consider the following 619-residue polypeptide: 1-deoxy-D-xylulose-5-phosphate synthase (619 aa).

Residues His-80 and 121–123 (GHS) each bind thiamine diphosphate. Asp-152 is a Mg(2+) binding site. Residues 153 to 154 (GA), Asn-181, Tyr-288, and Glu-370 contribute to the thiamine diphosphate site. Residue Asn-181 participates in Mg(2+) binding.

It belongs to the transketolase family. DXPS subfamily. Homodimer. Requires Mg(2+) as cofactor. Thiamine diphosphate serves as cofactor.

The catalysed reaction is D-glyceraldehyde 3-phosphate + pyruvate + H(+) = 1-deoxy-D-xylulose 5-phosphate + CO2. The protein operates within metabolic intermediate biosynthesis; 1-deoxy-D-xylulose 5-phosphate biosynthesis; 1-deoxy-D-xylulose 5-phosphate from D-glyceraldehyde 3-phosphate and pyruvate: step 1/1. In terms of biological role, catalyzes the acyloin condensation reaction between C atoms 2 and 3 of pyruvate and glyceraldehyde 3-phosphate to yield 1-deoxy-D-xylulose-5-phosphate (DXP). This Yersinia pestis (strain Pestoides F) protein is 1-deoxy-D-xylulose-5-phosphate synthase.